We begin with the raw amino-acid sequence, 319 residues long: MNPNYLDFEQPIADLEAKIQELRKASTGPAVNVETEVRALRDKLRVRTAQIFRDLSAWQVSQLARHPQRPYTLDYINTICDEFHELAGDRAYADDKAIVGGLGRIDGRPVVIIGHQKGRDTKTKVARNFGMPRPEGYRKALRLMKLAERFRLPLLTFIDTPGAYPGIGAEERGQSEAIARNLLEMAELKIPVICTVIGEGGSGGALAIGVGDRTLMLEYGTYSVISPEGCASILWKDAAKAKDAAEQLGLTAKRLKGLGLVDKVIREPTGGAHRNPEQMGKRLKAVLLNELDALEKIPVDTLLQQRYERLRSYGAYEGH.

Residues 32–293 enclose the CoA carboxyltransferase C-terminal domain; the sequence is NVETEVRALR…KAVLLNELDA (262 aa).

Belongs to the AccA family. In terms of assembly, acetyl-CoA carboxylase is a heterohexamer composed of biotin carboxyl carrier protein (AccB), biotin carboxylase (AccC) and two subunits each of ACCase subunit alpha (AccA) and ACCase subunit beta (AccD).

The protein resides in the cytoplasm. It catalyses the reaction N(6)-carboxybiotinyl-L-lysyl-[protein] + acetyl-CoA = N(6)-biotinyl-L-lysyl-[protein] + malonyl-CoA. The protein operates within lipid metabolism; malonyl-CoA biosynthesis; malonyl-CoA from acetyl-CoA: step 1/1. In terms of biological role, component of the acetyl coenzyme A carboxylase (ACC) complex. First, biotin carboxylase catalyzes the carboxylation of biotin on its carrier protein (BCCP) and then the CO(2) group is transferred by the carboxyltransferase to acetyl-CoA to form malonyl-CoA. In Xanthomonas axonopodis pv. citri (strain 306), this protein is Acetyl-coenzyme A carboxylase carboxyl transferase subunit alpha.